The primary structure comprises 2497 residues: Integrator complex subunit 1 homolog (2497 aa).

Positions 1-10 (MMLNKIKRSK) are enriched in basic residues. Disordered stretches follow at residues 1–151 (MMLN…NNNI), 300–337 (QPQPPQQQQTKQPVNIKTQPQQQQQQQQQPQPQQIKKS), 946–965 (QQQQQQLQTPQQQQQQQQPT), 1028–1108 (TTTT…TSSS), 1234–1292 (INNN…NQKS), and 1572–1604 (NNNNNNNNNNNNNNNNNNNNNNNNNNNNNNNIT). 5 stretches are compositionally biased toward low complexity: residues 37 to 46 (SDNNNNNSND), 60 to 151 (NNSI…NNNI), 305 to 333 (QQQQTKQPVNIKTQPQQQQQQQQQPQPQQ), 946 to 963 (QQQQQQLQTPQQQQQQQQ), and 1028 to 1058 (TTTTTSSTTTTTTTTTSTTTSTSTSSSSSSL). The span at 1075–1091 (SGLSGSSNGINQSSDSI) shows a compositional bias: polar residues. 4 stretches are compositionally biased toward low complexity: residues 1097–1108 (STSPTTTTTSSS), 1234–1265 (INNNDNNNNNNNNNNNNNNNNNNNNNDNNINK), 1272–1289 (HSNSMANNNLPNNNNKNN), and 1572–1602 (NNNNNNNNNNNNNNNNNNNNNNNNNNNNNNN). Positions 1645 to 1675 (RILKNTTQQKQQKQQQKESVQKSIQSLSKLI) form a coiled coil. A compositionally biased stretch (low complexity) spans 2084–2115 (QQQQQQQQQQQQQQKQQSNNSNNINNNNNNNN). Disordered stretches follow at residues 2084 to 2123 (QQQQQQQQQQQQQQKQQSNNSNNINNNNNNNNSEKKQKSK) and 2329 to 2350 (NNNNNNNNNNNNNNNNNNNNNN).

Belongs to the Integrator subunit 1 family. In terms of assembly, component of the Integrator complex. The core complex associates with protein phosphatase 2A subunits to form the Integrator-PP2A (INTAC) complex.

The protein resides in the nucleus. Component of the integrator complex, a multiprotein complex that terminates RNA polymerase II (Pol II) transcription in the promoter-proximal region of genes. The integrator complex provides a quality checkpoint during transcription elongation by driving premature transcription termination of transcripts that are unfavorably configured for transcriptional elongation: the complex terminates transcription by (1) catalyzing dephosphorylation of the C-terminal domain (CTD) of Pol II subunit polr2a, (2) degrading the exiting nascent RNA transcript via endonuclease activity and (3) promoting the release of Pol II from bound DNA. The integrator complex is also involved in terminating the synthesis of non-coding Pol II transcripts, such as enhancer RNAs (eRNAs), small nuclear RNAs (snRNAs), telomerase RNAs and long non-coding RNAs (lncRNAs). The polypeptide is Integrator complex subunit 1 homolog (ints1) (Dictyostelium discoideum (Social amoeba)).